The primary structure comprises 180 residues: Large ribosomal subunit protein uL5 (180 aa).

It belongs to the universal ribosomal protein uL5 family. Part of the 50S ribosomal subunit; part of the 5S rRNA/L5/L18/L25 subcomplex. Contacts the 5S rRNA and the P site tRNA. Forms a bridge to the 30S subunit in the 70S ribosome.

Functionally, this is one of the proteins that bind and probably mediate the attachment of the 5S RNA into the large ribosomal subunit, where it forms part of the central protuberance. In the 70S ribosome it contacts protein S13 of the 30S subunit (bridge B1b), connecting the 2 subunits; this bridge is implicated in subunit movement. Contacts the P site tRNA; the 5S rRNA and some of its associated proteins might help stabilize positioning of ribosome-bound tRNAs. This is Large ribosomal subunit protein uL5 from Lactococcus lactis subsp. lactis (strain IL1403) (Streptococcus lactis).